The primary structure comprises 83 residues: U3-theraphotoxin-Cg1a (83 aa).

A signal peptide spans 1 to 23; the sequence is MRTFTLIAILTCAVLVIFHAAAA. A propeptide spanning residues 24–44 is cleaved from the precursor; sequence EELEAQDVIETEALATLDEER. Intrachain disulfides connect Cys-48/Cys-61, Cys-52/Cys-75, and Cys-69/Cys-80.

This sequence belongs to the neurotoxin 12 (Hwtx-2) family. 03 (juruin) subfamily. Contains 3 disulfide bonds. Two different connectivities are observed in similar proteins (C1-C3, C2-C5, C4-C6 or C1-C4, C2-C5, C3-C6). As to expression, expressed by the venom gland.

Its subcellular location is the secreted. Its function is as follows. Probable ion channel inhibitor. This chain is U3-theraphotoxin-Cg1a, found in Chilobrachys guangxiensis (Chinese earth tiger tarantula).